Here is a 146-residue protein sequence, read N- to C-terminus: Phospho-2-dehydro-3-deoxyheptonate aldolase (146 aa).

The protein belongs to the class-II DAHP synthase family. In terms of assembly, homodimer.

It catalyses the reaction D-erythrose 4-phosphate + phosphoenolpyruvate + H2O = 7-phospho-2-dehydro-3-deoxy-D-arabino-heptonate + phosphate. The protein operates within metabolic intermediate biosynthesis; chorismate biosynthesis; chorismate from D-erythrose 4-phosphate and phosphoenolpyruvate: step 1/7. This chain is Phospho-2-dehydro-3-deoxyheptonate aldolase, found in Streptomyces lividans.